The sequence spans 243 residues: DUF724 domain-containing protein 5 (243 aa).

The segment covering 1–24 (MREKHYSEDNSRKRKRGELEHNSD) has biased composition (basic and acidic residues). Positions 1-51 (MREKHYSEDNSRKRKRGELEHNSDLNETVLPSDWTPDPVKNFAADDDDEET) are disordered. In terms of domain architecture, DUF724 spans 59 to 243 (VLPFVKKSPV…DLGVELEDVE (185 aa)). The stretch at 174-223 (KEMKDESSKKHKAEQEFGEMERKILEVKNKVLELQKQEAALEKQKDATYE) forms a coiled coil.

Homodimer. Expressed in leaves, flowers and siliques.

It is found in the nucleus. May be involved in the polar growth of plant cells via transportation of RNAs. The protein is DUF724 domain-containing protein 5 of Arabidopsis thaliana (Mouse-ear cress).